Reading from the N-terminus, the 125-residue chain is Small ribosomal subunit protein uS12 (125 aa).

Positions 9–31 (RQGREVEKIKSKSPAMENSPQRR) are disordered. The residue at position 89 (Asp-89) is a 3-methylthioaspartic acid.

Belongs to the universal ribosomal protein uS12 family. As to quaternary structure, part of the 30S ribosomal subunit. Contacts proteins S8 and S17. May interact with IF1 in the 30S initiation complex.

Its function is as follows. With S4 and S5 plays an important role in translational accuracy. Interacts with and stabilizes bases of the 16S rRNA that are involved in tRNA selection in the A site and with the mRNA backbone. Located at the interface of the 30S and 50S subunits, it traverses the body of the 30S subunit contacting proteins on the other side and probably holding the rRNA structure together. The combined cluster of proteins S8, S12 and S17 appears to hold together the shoulder and platform of the 30S subunit. This chain is Small ribosomal subunit protein uS12, found in Verminephrobacter eiseniae (strain EF01-2).